Consider the following 693-residue polypeptide: Elongation factor G (693 aa).

Residues 9 to 283 (ERVRNIGIIA…AVCDYLPSPL (275 aa)) form the tr-type G domain. GTP-binding positions include 18 to 25 (AHIDAGKT), 82 to 86 (DTPGH), and 136 to 139 (NKMD).

Belongs to the TRAFAC class translation factor GTPase superfamily. Classic translation factor GTPase family. EF-G/EF-2 subfamily.

The protein localises to the cytoplasm. Catalyzes the GTP-dependent ribosomal translocation step during translation elongation. During this step, the ribosome changes from the pre-translocational (PRE) to the post-translocational (POST) state as the newly formed A-site-bound peptidyl-tRNA and P-site-bound deacylated tRNA move to the P and E sites, respectively. Catalyzes the coordinated movement of the two tRNA molecules, the mRNA and conformational changes in the ribosome. The sequence is that of Elongation factor G from Dehalococcoides mccartyi (strain ATCC BAA-2100 / JCM 16839 / KCTC 5957 / BAV1).